The following is a 724-amino-acid chain: Polyribonucleotide nucleotidyltransferase (724 aa).

Residues D488 and D494 each contribute to the Mg(2+) site. Positions 555–614 (PRMITVKINPEKIRDVIGKGGSTIQALTKETGCTIDIGEDGTITIASTSSEGMAEAKRRI) constitute a KH domain. In terms of domain architecture, S1 motif spans 624 to 692 (GKIYNGTVLK…EKGRMRLSIK (69 aa)). A disordered region spans residues 697-724 (EEGDVPVAAPQAPGAGDAASQQQQQQQQ). The span at 701 to 724 (VPVAAPQAPGAGDAASQQQQQQQQ) shows a compositional bias: low complexity.

Belongs to the polyribonucleotide nucleotidyltransferase family. It depends on Mg(2+) as a cofactor.

The protein resides in the cytoplasm. The catalysed reaction is RNA(n+1) + phosphate = RNA(n) + a ribonucleoside 5'-diphosphate. Its function is as follows. Involved in mRNA degradation. Catalyzes the phosphorolysis of single-stranded polyribonucleotides processively in the 3'- to 5'-direction. The chain is Polyribonucleotide nucleotidyltransferase from Ralstonia pickettii (strain 12J).